The following is a 368-amino-acid chain: N-acetylneuraminate epimerase (368 aa).

The first 19 residues, Met1–Ala19, serve as a signal peptide directing secretion. Kelch repeat units follow at residues Thr40 to Asp84, Asn86 to Asn137, Lys139 to Ala173, Tyr174 to Gly219, Thr222 to Gly265, Glu287 to Asn336, and Leu338 to Gln367. Glu228 acts as the Proton acceptor in catalysis.

The protein belongs to the NanM family. Homodimer.

It localises to the periplasm. It carries out the reaction N-acetyl-alpha-neuraminate = N-acetyl-beta-neuraminate. In terms of biological role, converts alpha-N-acetylneuranimic acid (Neu5Ac) to the beta-anomer, accelerating the equilibrium between the alpha- and beta-anomers. Probably facilitates sialidase-negative bacteria to compete successfully for limited amounts of extracellular Neu5Ac, which is likely taken up in the beta-anomer. In addition, the rapid removal of sialic acid from solution might be advantageous to the bacterium to damp down host responses. This chain is N-acetylneuraminate epimerase, found in Shigella boydii serotype 4 (strain Sb227).